A 407-amino-acid chain; its full sequence is Phospholipase A1-II 7 (407 aa).

The active-site Acyl-ester intermediate is S230. Catalysis depends on charge relay system residues S230, D299, and H336.

This sequence belongs to the AB hydrolase superfamily. Lipase family.

The protein localises to the cytoplasm. Acylhydrolase that catalyzes the hydrolysis of phospholipids at the sn-1 position. The sequence is that of Phospholipase A1-II 7 from Oryza sativa subsp. indica (Rice).